A 131-amino-acid chain; its full sequence is Probable histone H2A.3 (131 aa).

A disordered region spans residues 1 to 23 (MAGRGKQLGSGAAKKSTSRSSKA). Over residues 9–23 (GSGAAKKSTSRSSKA) the composition is skewed to low complexity.

The protein belongs to the histone H2A family. The nucleosome is a histone octamer containing two molecules each of H2A, H2B, H3 and H4 assembled in one H3-H4 heterotetramer and two H2A-H2B heterodimers. The octamer wraps approximately 147 bp of DNA. Not ubiquitinated. As to expression, expressed in meristems and dividing cells.

The protein resides in the nucleus. It is found in the chromosome. Its function is as follows. Core component of nucleosome. Nucleosomes wrap and compact DNA into chromatin, limiting DNA accessibility to the cellular machineries which require DNA as a template. Histones thereby play a central role in transcription regulation, DNA repair, DNA replication and chromosomal stability. DNA accessibility is regulated via a complex set of post-translational modifications of histones, also called histone code, and nucleosome remodeling. In Arabidopsis thaliana (Mouse-ear cress), this protein is Probable histone H2A.3.